The primary structure comprises 221 residues: Chalcone--flavanone isomerase (221 aa).

Residues threonine 47, asparagine 112, and serine 189 each coordinate substrate.

It belongs to the chalcone isomerase family.

The catalysed reaction is a chalcone = a flavanone.. The protein operates within secondary metabolite biosynthesis; flavonoid biosynthesis. Catalyzes the intramolecular cyclization of bicyclic chalcones into tricyclic (S)-flavanones. Responsible for the isomerization of 4,2',4',6'-tetrahydroxychalcone (also termed chalcone) into naringenin. The sequence is that of Chalcone--flavanone isomerase (CHI) from Dianthus caryophyllus (Carnation).